The chain runs to 276 residues: Krueppel homolog 2 (276 aa).

The interval 1-37 is disordered; that stretch reads MSAPTDQPPRSEGAQTNSSERSSQQQEQPQQSQSQNV. Residues 18 to 35 are compositionally biased toward low complexity; the sequence is SSERSSQQQEQPQQSQSQ. Ser-22 is modified (phosphoserine). The next 3 helical transmembrane spans lie at 53 to 73, 125 to 145, and 181 to 201; these read ALWA…LPIF, LIFF…LYSV, and ILKA…VLAF.

It belongs to the PER33/POM33 family.

Its subcellular location is the membrane. Its function is as follows. Member of the dosage-dependent hierarchy effective upon white gene expression. The polypeptide is Krueppel homolog 2 (Kr-h2) (Drosophila melanogaster (Fruit fly)).